Consider the following 463-residue polypeptide: DDB1- and CUL4-associated factor 12-like protein 1 (463 aa).

The disordered stretch occupies residues 1–35 (MAQQQTGSRKRKAPAVEADAESSPSQGLAAADGEG). WD repeat units follow at residues 87-137 (LTER…PLLR), 138-184 (DSEA…SLDP), 185-252 (LCLG…DVEA), 253-297 (IPRA…ALSR), 298-341 (LLSI…QQNI), and 342-376 (RPLC…LFYD).

It belongs to the WD repeat DCAF12 family.

This is DDB1- and CUL4-associated factor 12-like protein 1 (DCAF12L1) from Homo sapiens (Human).